Consider the following 377-residue polypeptide: Dihydroorotate dehydrogenase (quinone) (377 aa).

Residues 82 to 86 (AGFDK) and T106 contribute to the FMN site. K86 serves as a coordination point for substrate. 131-135 (NRMGF) is a substrate binding site. Positions 159 and 192 each coordinate FMN. Residue N192 participates in substrate binding. S195 serves as the catalytic Nucleophile. Position 197 (N197) interacts with substrate. Residues K228 and T256 each contribute to the FMN site. 257-258 (NT) contacts substrate. FMN-binding positions include G282, G311, and 332–333 (YT).

Belongs to the dihydroorotate dehydrogenase family. Type 2 subfamily. As to quaternary structure, monomer. Requires FMN as cofactor.

The protein localises to the cell membrane. It carries out the reaction (S)-dihydroorotate + a quinone = orotate + a quinol. It participates in pyrimidine metabolism; UMP biosynthesis via de novo pathway; orotate from (S)-dihydroorotate (quinone route): step 1/1. Its function is as follows. Catalyzes the conversion of dihydroorotate to orotate with quinone as electron acceptor. The chain is Dihydroorotate dehydrogenase (quinone) from Corynebacterium efficiens (strain DSM 44549 / YS-314 / AJ 12310 / JCM 11189 / NBRC 100395).